The sequence spans 253 residues: Thiamine import ATP-binding protein ThiQ (253 aa).

The ABC transporter domain occupies 8–236; that stretch reads VRLDKVSFSY…AGPEAFRRYI (229 aa). 38–45 contacts ATP; it reads GPSGSGKS.

This sequence belongs to the ABC transporter superfamily. Thiamine importer (TC 3.A.1.19.1) family. As to quaternary structure, the complex is composed of two ATP-binding proteins (ThiQ), two transmembrane proteins (ThiP) and a solute-binding protein (ThiB).

Its subcellular location is the cell inner membrane. The catalysed reaction is thiamine(out) + ATP + H2O = thiamine(in) + ADP + phosphate + H(+). Its function is as follows. Part of the ABC transporter complex ThiBPQ involved in thiamine import. Responsible for energy coupling to the transport system. The sequence is that of Thiamine import ATP-binding protein ThiQ from Mesorhizobium japonicum (strain LMG 29417 / CECT 9101 / MAFF 303099) (Mesorhizobium loti (strain MAFF 303099)).